A 799-amino-acid polypeptide reads, in one-letter code: Oligopeptide transporter 1 (799 aa).

Disordered stretches follow at residues 1–26 (MSTI…PIQI) and 43–64 (DVNN…QKFD). Topologically, residues 1 to 108 (MSTIYRESDS…DPTIRLNHWR (108 aa)) are extracellular. Over residues 13 to 26 (SEPSPTPTTIPIQI) the composition is skewed to low complexity. A glycan (N-linked (GlcNAc...) asparagine) is linked at asparagine 46. Phosphothreonine is present on residues threonine 48, threonine 50, and threonine 51. Residues 109–129 (TWFLTTVFVVVFAGVNQFFSL) traverse the membrane as a helical segment. At 130 to 135 (RYPSLE) the chain is on the cytoplasmic side. The chain crosses the membrane as a helical span at residues 136–156 (INFLVAQVVCYPIGRILALLP). Residues 157-177 (DWKCSKVPFFDLNPGPFTKKE) are Extracellular-facing. The helical transmembrane segment at 178-198 (HAVVTIAVALTSSTAYAMYIL) threads the bilayer. Over 199–210 (NAQGSFYNMKLN) the chain is Cytoplasmic. The helical transmembrane segment at 211–231 (VGYQFLLVWTSQMIGYGAAGL) threads the bilayer. Residues 232-276 (TRRWVVNPASSIWPQTLISVSLFDSLHSRKVEKTVANGWTMPRYR) lie on the Extracellular side of the membrane. Residues 277 to 297 (FFLIVLIGSFIWYWVPGFLFT) form a helical membrane-spanning segment. The Cytoplasmic portion of the chain corresponds to 298 to 313 (GLSYFNVILWGSKTRH). Residues 314–334 (NFIANTIFGTQSGLGALPITF) form a helical membrane-spanning segment. Over 335 to 359 (DYTQVSQAMSGSVFATPFYVSANTY) the chain is Extracellular. A helical transmembrane segment spans residues 360–380 (ASVLIFFVIVLPCLYFTNTWY). The Cytoplasmic segment spans residues 381-428 (AKYMPVISGSTYDNTQNKYNVTKILNEDYSINLEKYKEYSPVFVPFSY). A helical membrane pass occupies residues 429–449 (LLSYALNFAAVIAVFVHCILY). Residues 450–482 (HGKDIVAKFKDRKNGGTDIHMRIYSKNYKDCPD) lie on the Extracellular side of the membrane. Residues 483–503 (WWYLLLQIVMIGLGFVAVCCF) form a helical membrane-spanning segment. The Cytoplasmic segment spans residues 504–508 (DTKFP). The chain crosses the membrane as a helical span at residues 509 to 529 (AWAFVIAILISLVNFIPQGIL). Over 530–540 (EAMTNQHVGLN) the chain is Extracellular. The chain crosses the membrane as a helical span at residues 541-561 (IITELICGYMLPLRPMANLLF). At 562–590 (KLYGFIVMRQGLNLSRDLKLAMYMKVSPR) the chain is on the cytoplasmic side. The chain crosses the membrane as a helical span at residues 591-611 (LIFAVQIYATIISGMVNVGVQ). At 612-659 (EWMMHNIDGLCTTDQPNGFTCANGRTVFNASIIWSLPKYLFSSGRIYN) the chain is on the extracellular side. Asparagine 640 is a glycosylation site (N-linked (GlcNAc...) asparagine). A helical membrane pass occupies residues 660-680 (PLMWFFLIGLLFPLAVYAVQW). The Cytoplasmic portion of the chain corresponds to 681-736 (KFPKFKFAKHIHTPVFFTGPGNIPPSTPYNYSLFFAMSFCLNLIRKRWRAWFNKYN). Residues 737–757 (FVMGAGVEAGVAISVVIIFLC) traverse the membrane as a helical segment. The Extracellular segment spans residues 758–799 (VQYPGGKLSWWGNNVWKRTYDNDYKKFYTLKKGETFGYDKWW).

Belongs to the oligopeptide OPT transporter family.

The protein localises to the cell membrane. Functionally, high affinity transporter for glutathione. Also transports tetra- and pentapeptides like the opioids leucine enkephalin (Tyr-Gly-Gly-Phe-Leu) and methionine enkephalin (Tyr-Gly-Gly_Phe-Met) across the cell membrane. The chain is Oligopeptide transporter 1 (OPT1) from Saccharomyces cerevisiae (strain ATCC 204508 / S288c) (Baker's yeast).